The primary structure comprises 178 residues: Large ribosomal subunit protein uL6 (178 aa).

The protein belongs to the universal ribosomal protein uL6 family. In terms of assembly, part of the 50S ribosomal subunit.

This protein binds to the 23S rRNA, and is important in its secondary structure. It is located near the subunit interface in the base of the L7/L12 stalk, and near the tRNA binding site of the peptidyltransferase center. The protein is Large ribosomal subunit protein uL6 of Francisella philomiragia subsp. philomiragia (strain ATCC 25017 / CCUG 19701 / FSC 153 / O#319-036).